Consider the following 336-residue polypeptide: MMKIKITKSTILLIISFLFILAIMAYIGLDKIIKVLINTNPEYVILAFILQILVSVILSARWKFIIKILGYSANFKNIFLLVLMGLFINNITPSMRGGGEAFRAYYLSKLEEIPKGLAFSTVVVERVLDTAIFLFFTLFVIGYFVVTGFKYLEYLILSWIFLFSLTAIIIYLIANKGLLIKTVTKISKFICKYCSYNYDETKILQSIEEFYNSMKFFKNKRGWEVVVAIFLSVMRYIFDILKLWLLFLSLSYVVSVICVSAVYLITLLSGVLSITPSGFGTADTVMILSFSAFNIPPSVAAAVTLLDRLVSYILPTILGYIAMLIIKREIDKKKGK.

9 consecutive transmembrane segments (helical) span residues 9–29 (STILLIISFLFILAIMAYIGL), 40–60 (NPEYVILAFILQILVSVILSA), 68–88 (ILGYSANFKNIFLLVLMGLFI), 127–147 (VLDTAIFLFFTLFVIGYFVVT), 154–174 (YLILSWIFLFSLTAIIIYLIA), 223–243 (WEVVVAIFLSVMRYIFDILKL), 245–265 (LLFLSLSYVVSVICVSAVYLI), 285–305 (VMILSFSAFNIPPSVAAAVTL), and 306–326 (LDRLVSYILPTILGYIAMLII).

This sequence belongs to the UPF0104 family.

Its subcellular location is the cell membrane. The sequence is that of UPF0104 membrane protein MJ1595 from Methanocaldococcus jannaschii (strain ATCC 43067 / DSM 2661 / JAL-1 / JCM 10045 / NBRC 100440) (Methanococcus jannaschii).